The sequence spans 345 residues: S-adenosylmethionine:tRNA ribosyltransferase-isomerase (345 aa).

Belongs to the QueA family. As to quaternary structure, monomer.

It is found in the cytoplasm. The catalysed reaction is 7-aminomethyl-7-carbaguanosine(34) in tRNA + S-adenosyl-L-methionine = epoxyqueuosine(34) in tRNA + adenine + L-methionine + 2 H(+). It participates in tRNA modification; tRNA-queuosine biosynthesis. In terms of biological role, transfers and isomerizes the ribose moiety from AdoMet to the 7-aminomethyl group of 7-deazaguanine (preQ1-tRNA) to give epoxyqueuosine (oQ-tRNA). The chain is S-adenosylmethionine:tRNA ribosyltransferase-isomerase from Shewanella sp. (strain MR-7).